A 140-amino-acid polypeptide reads, in one-letter code: RxLR effector protein CRE9 (140 aa).

An N-terminal signal peptide occupies residues 1-24 (MRTSVFVALVVATFVATCISFTSA). Positions 43-61 (RTLAEADDWWLASTNTEER) match the RxLR-dEER motif. The helical transmembrane segment at 119–139 (LKILYGALLAGLIIVGVEAML) threads the bilayer.

This sequence belongs to the RxLR effector family.

Its subcellular location is the secreted. It is found in the host cell. The protein localises to the membrane. Its function is as follows. Effector that is involved in host plant infection. Contributes to virulence during the early infection stage, by inhibiting plant defense responses induced by both PAMP-triggered immunity (PTI) and effector-triggered immunity (ETI). This chain is RxLR effector protein CRE9, found in Phytophthora infestans (strain T30-4) (Potato late blight agent).